A 127-amino-acid chain; its full sequence is Large ribosomal subunit protein eL32 (127 aa).

A compositionally biased stretch (basic and acidic residues) spans W38 to M48. A disordered region spans residues W38–P66.

This sequence belongs to the eukaryotic ribosomal protein eL32 family.

The protein is Large ribosomal subunit protein eL32 of Thermococcus gammatolerans (strain DSM 15229 / JCM 11827 / EJ3).